The following is an 871-amino-acid chain: uncharacterized protein (871 aa).

11 helical membrane passes run Ala11–Leu31, Tyr92–Leu112, Phe139–Arg159, Thr380–Ser400, Leu422–Val442, Val475–Ile495, Phe520–Leu540, Leu562–Ile582, Ile586–Tyr606, Leu629–Leu649, and Trp653–Phe673. 6 positions are modified to phosphoserine: Ser725, Ser726, Ser727, Ser729, Ser737, and Ser761. Residues Ser727–Ser740 are compositionally biased toward polar residues. The interval Ser727–Lys746 is disordered.

Belongs to the CSC1 (TC 1.A.17) family.

The protein localises to the golgi apparatus membrane. In terms of biological role, acts as an osmosensitive calcium-permeable cation channel. This is an uncharacterized protein from Schizosaccharomyces pombe (strain 972 / ATCC 24843) (Fission yeast).